The following is a 425-amino-acid chain: Enolase (425 aa).

Glutamine 163 contributes to the (2R)-2-phosphoglycerate binding site. Glutamate 205 acts as the Proton donor in catalysis. Residues aspartate 242, glutamate 285, and aspartate 312 each coordinate Mg(2+). The (2R)-2-phosphoglycerate site is built by lysine 337, arginine 366, serine 367, and lysine 388. The active-site Proton acceptor is the lysine 337.

Belongs to the enolase family. Mg(2+) is required as a cofactor.

Its subcellular location is the cytoplasm. The protein resides in the secreted. It localises to the cell surface. It carries out the reaction (2R)-2-phosphoglycerate = phosphoenolpyruvate + H2O. It functions in the pathway carbohydrate degradation; glycolysis; pyruvate from D-glyceraldehyde 3-phosphate: step 4/5. Its function is as follows. Catalyzes the reversible conversion of 2-phosphoglycerate (2-PG) into phosphoenolpyruvate (PEP). It is essential for the degradation of carbohydrates via glycolysis. This is Enolase from Ruegeria sp. (strain TM1040) (Silicibacter sp.).